Reading from the N-terminus, the 301-residue chain is Methionine aminopeptidase (301 aa).

Residue His-65 coordinates substrate. Residues Asp-85, Asp-96, and His-156 each coordinate a divalent metal cation. His-164 serves as a coordination point for substrate. Glu-189 and Glu-284 together coordinate a divalent metal cation.

Belongs to the peptidase M24A family. Methionine aminopeptidase archaeal type 2 subfamily. As to quaternary structure, monomer. Co(2+) is required as a cofactor. It depends on Zn(2+) as a cofactor. Mn(2+) serves as cofactor. The cofactor is Fe(2+).

The catalysed reaction is Release of N-terminal amino acids, preferentially methionine, from peptides and arylamides.. In terms of biological role, removes the N-terminal methionine from nascent proteins. The N-terminal methionine is often cleaved when the second residue in the primary sequence is small and uncharged (Met-Ala-, Cys, Gly, Pro, Ser, Thr, or Val). This is Methionine aminopeptidase from Saccharolobus solfataricus (strain ATCC 35092 / DSM 1617 / JCM 11322 / P2) (Sulfolobus solfataricus).